A 164-amino-acid polypeptide reads, in one-letter code: Glutamate uptake regulatory protein (164 aa).

Residues 5–66 (LDDFDIKILD…LLDPQKIGLG (62 aa)) enclose the HTH asnC-type domain. A DNA-binding region (H-T-H motif) is located at residues 24 to 43 (MAELSEKTGLSANACWRRIR).

Represses the secondary, H(+)-coupled glutamate uptake system (Gluemp) genes. In Zymomonas mobilis subsp. mobilis (strain ATCC 31821 / ZM4 / CP4), this protein is Glutamate uptake regulatory protein (grp).